The sequence spans 88 residues: Large ribosomal subunit protein bL27 (88 aa).

Residues 1-21 (MAHKKGQGSTQNNRDSAGRRL) are disordered.

The protein belongs to the bacterial ribosomal protein bL27 family.

The sequence is that of Large ribosomal subunit protein bL27 from Helicobacter acinonychis (strain Sheeba).